The sequence spans 217 residues: Homeobox protein Hox-B7 (217 aa).

Positions 126-131 match the Antp-type hexapeptide motif; the sequence is IYPWMR. The segment at residues 137 to 196 is a DNA-binding region (homeobox); it reads RKRGRQTYTRYQTLELEKEFHYNRYLTRRRRIEIAHTLCLTERQIKIWFQNRRMKWKKEN. The segment at 192–217 is disordered; sequence WKKENKTSGPGTTGQDKAEAEEEEEE.

The protein belongs to the Antp homeobox family. Forms a DNA-binding heterodimer with transcription factor PBX1.

It localises to the nucleus. In terms of biological role, sequence-specific transcription factor which is part of a developmental regulatory system that provides cells with specific positional identities on the anterior-posterior axis. The sequence is that of Homeobox protein Hox-B7 (Hoxb7) from Mus musculus (Mouse).